The primary structure comprises 294 residues: 4-diphosphocytidyl-2-C-methyl-D-erythritol kinase (294 aa).

Lys16 is a catalytic residue. 99–109 (PMGAGLGGGSS) contacts ATP. The active site involves Asp141.

It belongs to the GHMP kinase family. IspE subfamily.

It catalyses the reaction 4-CDP-2-C-methyl-D-erythritol + ATP = 4-CDP-2-C-methyl-D-erythritol 2-phosphate + ADP + H(+). It functions in the pathway isoprenoid biosynthesis; isopentenyl diphosphate biosynthesis via DXP pathway; isopentenyl diphosphate from 1-deoxy-D-xylulose 5-phosphate: step 3/6. Its function is as follows. Catalyzes the phosphorylation of the position 2 hydroxy group of 4-diphosphocytidyl-2C-methyl-D-erythritol. This chain is 4-diphosphocytidyl-2-C-methyl-D-erythritol kinase, found in Polynucleobacter asymbioticus (strain DSM 18221 / CIP 109841 / QLW-P1DMWA-1) (Polynucleobacter necessarius subsp. asymbioticus).